Consider the following 61-residue polypeptide: Large ribosomal subunit protein bL32 (61 aa).

Positions 1–16 are enriched in basic residues; that stretch reads MAVPKRKTSPSKRGMR. Positions 1–61 are disordered; it reads MAVPKRKTSP…RSVLTPKNSG (61 aa). Basic and acidic residues predominate over residues 28–44; the sequence is VEDKDSGELRRPHHIDL.

The protein belongs to the bacterial ribosomal protein bL32 family.

This Bartonella bacilliformis (strain ATCC 35685 / KC583 / Herrer 020/F12,63) protein is Large ribosomal subunit protein bL32.